Consider the following 156-residue polypeptide: Small ribosomal subunit protein uS7 (156 aa).

Belongs to the universal ribosomal protein uS7 family. Part of the 30S ribosomal subunit. Contacts proteins S9 and S11.

Functionally, one of the primary rRNA binding proteins, it binds directly to 16S rRNA where it nucleates assembly of the head domain of the 30S subunit. Is located at the subunit interface close to the decoding center, probably blocks exit of the E-site tRNA. The protein is Small ribosomal subunit protein uS7 of Geobacter sulfurreducens (strain ATCC 51573 / DSM 12127 / PCA).